The chain runs to 453 residues: Jacalin-related lectin 40 (453 aa).

3 consecutive Jacalin-type lectin domains span residues Met1–Thr142, His154–Ser296, and Pro306–Pro449. Ala2 is subject to N-acetylalanine.

Belongs to the jacalin lectin family. As to expression, expressed in roots.

The chain is Jacalin-related lectin 40 (JAL40) from Arabidopsis thaliana (Mouse-ear cress).